Reading from the N-terminus, the 86-residue chain is Small ribosomal subunit protein uS15c (86 aa).

This sequence belongs to the universal ribosomal protein uS15 family. Part of the 30S ribosomal subunit.

Its subcellular location is the plastid. This Cuscuta gronovii (Common dodder) protein is Small ribosomal subunit protein uS15c (rps15).